We begin with the raw amino-acid sequence, 319 residues long: Cobalamin biosynthesis protein CobD (319 aa).

Transmembrane regions (helical) follow at residues Ala55–Leu75, Glu78–Gly98, Val153–Ala173, and Leu296–Val316.

It belongs to the CobD/CbiB family.

The protein localises to the cell membrane. It participates in cofactor biosynthesis; adenosylcobalamin biosynthesis. Functionally, converts cobyric acid to cobinamide by the addition of aminopropanol on the F carboxylic group. In Citrobacter koseri (strain ATCC BAA-895 / CDC 4225-83 / SGSC4696), this protein is Cobalamin biosynthesis protein CobD.